Here is a 92-residue protein sequence, read N- to C-terminus: Large ribosomal subunit protein bL27 (92 aa).

The propeptide occupies 1 to 10; sequence MLLQLQIQLF.

This sequence belongs to the bacterial ribosomal protein bL27 family. The N-terminus is cleaved by ribosomal processing cysteine protease Prp.

The chain is Large ribosomal subunit protein bL27 from Aster yellows witches'-broom phytoplasma (strain AYWB).